Consider the following 502-residue polypeptide: Probable cytochrome P450 28d1 (502 aa).

Cys446 is a heme binding site.

This sequence belongs to the cytochrome P450 family. The cofactor is heme.

Its subcellular location is the endoplasmic reticulum membrane. The protein resides in the microsome membrane. In terms of biological role, may be involved in the metabolism of insect hormones and in the breakdown of synthetic insecticides. In Drosophila melanogaster (Fruit fly), this protein is Probable cytochrome P450 28d1 (Cyp28d1).